We begin with the raw amino-acid sequence, 168 residues long: uncharacterized protein (168 aa).

The interval 18–73 is disordered; sequence RTTVKTKSHNPKTLYPNNKPRWESKLHAGPKGFQSSRTSEKPGRPDPDPEDDPPIP. Basic and acidic residues predominate over residues 55-64; the sequence is TSEKPGRPDP. Helical transmembrane passes span 84–104 and 113–133; these read IVVS…VLEV and VPLW…ALGI.

It localises to the membrane. This is an uncharacterized protein from Arabidopsis thaliana (Mouse-ear cress).